The primary structure comprises 340 residues: Protein-glutamate methylesterase/protein-glutamine glutaminase 1 (340 aa).

The Response regulatory domain maps to 5-122; that stretch reads KLFIVDDSAL…KVVSELKEKI (118 aa). The residue at position 56 (Asp-56) is a 4-aspartylphosphate. The CheB-type methylesterase domain maps to 148-340; sequence GKNGRQLVVI…AIAEEIAANI (193 aa). Residues Ser-160, His-187, and Asp-285 contribute to the active site.

It belongs to the CheB family. Post-translationally, phosphorylated by CheA. Phosphorylation of the N-terminal regulatory domain activates the methylesterase activity.

It is found in the cytoplasm. It carries out the reaction [protein]-L-glutamate 5-O-methyl ester + H2O = L-glutamyl-[protein] + methanol + H(+). The enzyme catalyses L-glutaminyl-[protein] + H2O = L-glutamyl-[protein] + NH4(+). In terms of biological role, involved in chemotaxis. Part of a chemotaxis signal transduction system that modulates chemotaxis in response to various stimuli. Catalyzes the demethylation of specific methylglutamate residues introduced into the chemoreceptors (methyl-accepting chemotaxis proteins or MCP) by CheR. Also mediates the irreversible deamidation of specific glutamine residues to glutamic acid. This chain is Protein-glutamate methylesterase/protein-glutamine glutaminase 1, found in Carboxydothermus hydrogenoformans (strain ATCC BAA-161 / DSM 6008 / Z-2901).